Reading from the N-terminus, the 60-residue chain is Prokaryotic ubiquitin-like protein UBact (60 aa).

The interval 1–60 (MPERKTQPTTDQPWTKPNDGGDESGPRSPEVERPNTRDLLERMKRVDPRQARRYRQRSGE) is disordered. Residues 29-50 (PEVERPNTRDLLERMKRVDPRQ) are compositionally biased toward basic and acidic residues. The segment covering 51 to 60 (ARRYRQRSGE) has biased composition (basic residues). Glu60 participates in a covalent cross-link: Isoglutamyl lysine isopeptide (Glu-Lys) (interchain with K-? in acceptor proteins).

The protein belongs to the ubiquitin-like protein UBact family.

Functionally, may function as a protein modifier covalently attached to lysine residues of substrate proteins. This may serve to target the modified proteins for degradation by proteasomes. This chain is Prokaryotic ubiquitin-like protein UBact, found in Fraserbacteria sp. (strain RBG_16_55_9).